The primary structure comprises 798 residues: Neuroligin-1 (798 aa).

Residues 1-17 (MERIYLLLLLFLPRIRS) form the signal peptide. The Extracellular segment spans residues 18–685 (YDVRSVTTSW…AAGSFTGKAL (668 aa)). An intrachain disulfide couples Cys-86 to Cys-125. N-linked (GlcNAc...) asparagine glycosylation is found at Asn-164, Asn-292, and Asn-315. A disulfide bridge connects residues Cys-288 and Cys-307. The segment at 636–676 (ANLPFPPPPMPPSPPPELTTKPKPSESPTTLQTTTESEKAA) is disordered. Residues 639 to 652 (PFPPPPMPPSPPPE) are compositionally biased toward pro residues. The segment covering 653 to 665 (LTTKPKPSESPTT) has biased composition (low complexity). The helical transmembrane segment at 686 to 706 (GGVIFIGCGFLIMNVCLLIAV) threads the bilayer. Topologically, residues 707–798 (RREWGKKRRN…QAPTLEEIQV (92 aa)) are cytoplasmic. The tract at residues 731 to 765 (HGGGAEQYNSLNSPEPLLSASHKNSTSMRPAGISP) is disordered.

Belongs to the type-B carboxylesterase/lipase family. As to quaternary structure, interacts (via extracellular domain) with isoform b of madd-4; the interaction is required for the localization to postsynaptic domains. Interacts with unc-49.

Its subcellular location is the cell membrane. It localises to the synapse. Probable neuronal cell surface protein thought to be involved in cell-cell-interactions by forming intercellular junctions through binding to beta-neurexins. Plays a role in the clustering of the GABA(A) receptor unc-49 at postsynaptic sites in neuromuscular junctions (NMJs) via the interaction with madd-4 and neurexin nrx-1 and is thereby required for normal GABAergic synaptic transmission. This is Neuroligin-1 (nlg-1) from Caenorhabditis elegans.